Here is an 869-residue protein sequence, read N- to C-terminus: DNA mismatch repair protein MutS (869 aa).

G602 to S609 contributes to the ATP binding site.

Belongs to the DNA mismatch repair MutS family.

This protein is involved in the repair of mismatches in DNA. It is possible that it carries out the mismatch recognition step. This protein has a weak ATPase activity. The chain is DNA mismatch repair protein MutS from Staphylococcus carnosus (strain TM300).